Reading from the N-terminus, the 188-residue chain is dCTP deaminase (188 aa).

DCTP is bound by residues K111 to R116, T135 to E137, Q156, Y170, and Q180. E137 (proton donor/acceptor) is an active-site residue.

It belongs to the dCTP deaminase family. In terms of assembly, homotrimer.

The catalysed reaction is dCTP + H2O + H(+) = dUTP + NH4(+). It functions in the pathway pyrimidine metabolism; dUMP biosynthesis; dUMP from dCTP (dUTP route): step 1/2. Catalyzes the deamination of dCTP to dUTP. This is dCTP deaminase from Laribacter hongkongensis (strain HLHK9).